We begin with the raw amino-acid sequence, 875 residues long: Serrate RNA effector molecule homolog (875 aa).

The tract at residues 1 to 90 (MGDSDDEYDR…RRDWDEHSSD (90 aa)) is disordered. At glycine 2 the chain carries N-acetylglycine. At serine 4 the chain carries Phosphoserine. At tyrosine 8 the chain carries Phosphotyrosine. Positions 8–73 (YDRRRRDKFR…ERFSPPRHEL (66 aa)) are enriched in basic and acidic residues. 3 positions are modified to phosphoserine: serine 67, serine 74, and serine 136. A Glycyl lysine isopeptide (Lys-Gly) (interchain with G-Cter in SUMO2) cross-link involves residue lysine 150. Residues 272–411 (EEEEQAGKTG…KPKDAAGLEC (140 aa)) are disordered. Over residues 297–345 (EGERKANDKDEKKEDGKQAENDSSNDDKTKKSEGDGDKEEKKEEAEKEA) the composition is skewed to basic and acidic residues. A compositionally biased stretch (acidic residues) spans 369 to 386 (SESESEGGQAEEEKEEAE). Positions 387–411 (EALKEKEKPKEEEKEKPKDAAGLEC) are enriched in basic and acidic residues. Phosphoserine is present on residues serine 492 and serine 539. Threonine 543 bears the Phosphothreonine mark. Serine 569 carries the post-translational modification Phosphoserine. Residues 571-597 (EEEELLGSSGGPPPEEPPKEGNPAEIN) are disordered. Position 670 is a phosphothreonine (threonine 670). Serine 678 bears the Phosphoserine mark. 3 positions are modified to omega-N-methylarginine: arginine 832, arginine 839, and arginine 849. Residues 834–853 (NYDAFRGQGGYPGKPRNRMV) are disordered.

The protein belongs to the ARS2 family. As to quaternary structure, interacts with CASP8AP2 and ERBB4. Interacts with NCBP1/CBP80 and DROSHA. Interacts with LUZP4. Interacts with NCBP2/CBP20 and NCBP3. Interacts with MTREX. In terms of tissue distribution, widely expressed, with a preference for proliferating cells. Highly expressed in hematopoietic tissues and reduced or absent expression in parenchymal organs like liver and kidney. In the brain, expressed in the subventricular zone by niche astrocytes, ependymal cells and neural stem cells. In this cerebral context, expressed in slowly dividing cells.

It is found in the nucleus. It localises to the nucleoplasm. Its subcellular location is the cytoplasm. In terms of biological role, acts as a mediator between the cap-binding complex (CBC) and the primary microRNAs (miRNAs) processing machinery during cell proliferation. Contributes to the stability and delivery of capped primary miRNA transcripts to the primary miRNA processing complex containing DGCR8 and DROSHA, thereby playing a role in RNA-mediated gene silencing (RNAi) by miRNAs. Binds capped RNAs (m7GpppG-capped RNA); however interaction is probably mediated via its interaction with NCBP1/CBP80 component of the CBC complex. Involved in cell cycle progression at S phase. Does not directly confer arsenite resistance but rather modulates arsenic sensitivity. Independently of its activity on miRNAs, necessary and sufficient to promote neural stem cell self-renewal. Does so by directly binding SOX2 promoter and positively regulating its transcription. The chain is Serrate RNA effector molecule homolog (Srrt) from Mus musculus (Mouse).